The sequence spans 879 residues: Metabotropic glutamate receptor 3 (879 aa).

An N-terminal signal peptide occupies residues 1-22 (MKMLTRLQVLTLALFSKGFLLS). Topologically, residues 23–576 (LGDHNFLRRE…EDYIRWEDAW (554 aa)) are extracellular. A disulfide bridge links Cys57 with Cys99. L-glutamate-binding positions include Ser151 and 172 to 174 (AST). Asn209 carries an N-linked (GlcNAc...) asparagine glycan. An L-glutamate-binding site is contributed by Tyr222. 7 disulfide bridges follow: Cys240–Cys527, Cys361–Cys373, Cys412–Cys419, Cys509–Cys528, Cys513–Cys531, Cys534–Cys546, and Cys549–Cys562. A glycan (N-linked (GlcNAc...) asparagine) is linked at Asn292. Asp301 provides a ligand contact to L-glutamate. L-glutamate is bound at residue Lys389. 2 N-linked (GlcNAc...) asparagine glycosylation sites follow: Asn414 and Asn439. The helical transmembrane segment at 577–599 (VIGPVTIACLGFMCTCMVVTVFI) threads the bilayer. Topologically, residues 600–613 (KHNNTPLVKASGRE) are cytoplasmic. A helical transmembrane segment spans residues 614–634 (LCYILLFGVGLSYCMTFFFIA). At 635–645 (KPSPVICALRR) the chain is on the extracellular side. Residues 646–664 (LGLGSSFAICYSALLTKTN) traverse the membrane as a helical segment. The Cytoplasmic segment spans residues 665-688 (CIARIFDGVKNGAQRPKFISPSSQ). A helical transmembrane segment spans residues 689–709 (VFICLGLILVQIVMVSVWLIL). The Extracellular portion of the chain corresponds to 710–734 (EAPGTRRYTLAEKRETVILKCNVKD). The chain crosses the membrane as a helical span at residues 735-756 (SSMLISLTYDVILVILCTVYAF). Topologically, residues 757–769 (KTRKCPENFNEAK) are cytoplasmic. The chain crosses the membrane as a helical span at residues 770–792 (FIGFTMYTTCIIWLAFLPIFYVT). Residues 793–802 (SSDYRVQTTT) lie on the Extracellular side of the membrane. Residues 803–828 (MCISVSLSGFVVLGCLFAPKVHIILF) traverse the membrane as a helical segment. Residues 829–879 (QPQKNVVTHRLHLNRFSVSGTGTTYSQSSASTYVPTVCNGREVLDSTTSSL) are Cytoplasmic-facing.

Belongs to the G-protein coupled receptor 3 family. In terms of assembly, interacts with TAMALIN.

The protein resides in the cell membrane. In terms of biological role, G-protein coupled receptor for glutamate. Ligand binding causes a conformation change that triggers signaling via guanine nucleotide-binding proteins (G proteins) and modulates the activity of down-stream effectors. Signaling inhibits adenylate cyclase activity. The chain is Metabotropic glutamate receptor 3 (GRM3) from Pongo abelii (Sumatran orangutan).